Reading from the N-terminus, the 344-residue chain is tRNA N6-adenosine threonylcarbamoyltransferase (344 aa).

The Fe cation site is built by His-111 and His-115. Residues 133–137 (LVSGG), Asp-166, Gly-179, and Asn-283 contribute to the substrate site. Position 311 (Asp-311) interacts with Fe cation.

It belongs to the KAE1 / TsaD family. It depends on Fe(2+) as a cofactor.

The protein localises to the cytoplasm. It catalyses the reaction L-threonylcarbamoyladenylate + adenosine(37) in tRNA = N(6)-L-threonylcarbamoyladenosine(37) in tRNA + AMP + H(+). In terms of biological role, required for the formation of a threonylcarbamoyl group on adenosine at position 37 (t(6)A37) in tRNAs that read codons beginning with adenine. Is involved in the transfer of the threonylcarbamoyl moiety of threonylcarbamoyl-AMP (TC-AMP) to the N6 group of A37, together with TsaE and TsaB. TsaD likely plays a direct catalytic role in this reaction. The sequence is that of tRNA N6-adenosine threonylcarbamoyltransferase from Orientia tsutsugamushi (strain Ikeda) (Rickettsia tsutsugamushi).